The chain runs to 334 residues: Nucleoid-associated protein plu2870 (334 aa).

The protein belongs to the YejK family.

It is found in the cytoplasm. Its subcellular location is the nucleoid. The sequence is that of Nucleoid-associated protein plu2870 from Photorhabdus laumondii subsp. laumondii (strain DSM 15139 / CIP 105565 / TT01) (Photorhabdus luminescens subsp. laumondii).